We begin with the raw amino-acid sequence, 284 residues long: tRNA-cytidine(32) 2-sulfurtransferase (284 aa).

A compositionally biased stretch (polar residues) spans 1–11 (MTFHQPVSETA). A disordered region spans residues 1–20 (MTFHQPVSETAQPDEASGHP). The PP-loop motif signature appears at 63–68 (SGGKDS). The [4Fe-4S] cluster site is built by Cys-138, Cys-141, and Cys-229.

The protein belongs to the TtcA family. Homodimer. Mg(2+) serves as cofactor. It depends on [4Fe-4S] cluster as a cofactor.

It localises to the cytoplasm. The catalysed reaction is cytidine(32) in tRNA + S-sulfanyl-L-cysteinyl-[cysteine desulfurase] + AH2 + ATP = 2-thiocytidine(32) in tRNA + L-cysteinyl-[cysteine desulfurase] + A + AMP + diphosphate + H(+). The protein operates within tRNA modification. Catalyzes the ATP-dependent 2-thiolation of cytidine in position 32 of tRNA, to form 2-thiocytidine (s(2)C32). The sulfur atoms are provided by the cysteine/cysteine desulfurase (IscS) system. In Chelativorans sp. (strain BNC1), this protein is tRNA-cytidine(32) 2-sulfurtransferase.